The primary structure comprises 311 residues: Methionyl-tRNA formyltransferase (311 aa).

The tract at residues 33–52 (RPDRPAGRGRHQRSSPVREL) is disordered. 110 to 113 (SLLP) is a binding site for (6S)-5,6,7,8-tetrahydrofolate.

It belongs to the Fmt family.

The catalysed reaction is L-methionyl-tRNA(fMet) + (6R)-10-formyltetrahydrofolate = N-formyl-L-methionyl-tRNA(fMet) + (6S)-5,6,7,8-tetrahydrofolate + H(+). Its function is as follows. Attaches a formyl group to the free amino group of methionyl-tRNA(fMet). The formyl group appears to play a dual role in the initiator identity of N-formylmethionyl-tRNA by promoting its recognition by IF2 and preventing the misappropriation of this tRNA by the elongation apparatus. In Parafrankia sp. (strain EAN1pec), this protein is Methionyl-tRNA formyltransferase.